Reading from the N-terminus, the 219-residue chain is MQFDWSAIWPAIPLLIEGAKMTLWISVLGLAGGLVIGLLAGFARTFGGWIANHVALVFIEVIRGTPIVVQVMFIYFALPMAFNDLRIDPFTAAVVTIMINSGAYIAEITRGAVLSIHKGFREAGLALGLSRWETIRYVILPLALRRMLPPLGNQWIISIKDTSLFIVIGVAELTRQGQEIIAGNFRALEIWSAVAVFYLIITLVLSFILRRLERRMKIL.

Topologically, residues 1-22 (MQFDWSAIWPAIPLLIEGAKMT) are periplasmic. The 191-residue stretch at 19 to 209 (AKMTLWISVL…IITLVLSFIL (191 aa)) folds into the ABC transmembrane type-1 domain. Residues 23–43 (LWISVLGLAGGLVIGLLAGFA) traverse the membrane as a helical segment. Over 44-53 (RTFGGWIANH) the chain is Cytoplasmic. Residues 54 to 74 (VALVFIEVIRGTPIVVQVMFI) traverse the membrane as a helical segment. At 75–88 (YFALPMAFNDLRID) the chain is on the periplasmic side. The helical transmembrane segment at 89–109 (PFTAAVVTIMINSGAYIAEIT) threads the bilayer. At 110-150 (RGAVLSIHKGFREAGLALGLSRWETIRYVILPLALRRMLPP) the chain is on the cytoplasmic side. The helical transmembrane segment at 151–171 (LGNQWIISIKDTSLFIVIGVA) threads the bilayer. The Periplasmic portion of the chain corresponds to 172–187 (ELTRQGQEIIAGNFRA). A helical membrane pass occupies residues 188–208 (LEIWSAVAVFYLIITLVLSFI). Residues 209 to 219 (LRRLERRMKIL) are Cytoplasmic-facing.

The protein belongs to the binding-protein-dependent transport system permease family. HisMQ subfamily.

The protein resides in the cell inner membrane. Part of the binding-protein-dependent transport system for glutamine; probably responsible for the translocation of the substrate across the membrane. In Escherichia coli O6:H1 (strain CFT073 / ATCC 700928 / UPEC), this protein is Glutamine transport system permease protein GlnP (glnP).